Here is a 271-residue protein sequence, read N- to C-terminus: D-methionine-binding lipoprotein MetQ (271 aa).

An N-terminal signal peptide occupies residues 1–22; it reads MSLKFKSIAAISALIGTLTLVG. Cysteine 23 carries N-palmitoyl cysteine lipidation. Cysteine 23 carries the S-diacylglycerol cysteine lipid modification.

This sequence belongs to the NlpA lipoprotein family.

The protein resides in the cell membrane. Its function is as follows. This protein is a component of a D-methionine permease, a binding protein-dependent, ATP-driven transport system. This is D-methionine-binding lipoprotein MetQ (metQ) from Yersinia pestis.